The following is a 505-amino-acid chain: Protein nucleotidyltransferase YdiU (505 aa).

8 residues coordinate ATP: Gly-102, Gly-104, Arg-105, Lys-125, Asp-137, Gly-138, Arg-188, and Arg-195. Asp-264 functions as the Proton acceptor in the catalytic mechanism. The Mg(2+) site is built by Asn-265 and Asp-274. Asp-274 provides a ligand contact to ATP.

The protein belongs to the SELO family. Mg(2+) serves as cofactor. It depends on Mn(2+) as a cofactor.

It catalyses the reaction L-seryl-[protein] + ATP = 3-O-(5'-adenylyl)-L-seryl-[protein] + diphosphate. The enzyme catalyses L-threonyl-[protein] + ATP = 3-O-(5'-adenylyl)-L-threonyl-[protein] + diphosphate. It carries out the reaction L-tyrosyl-[protein] + ATP = O-(5'-adenylyl)-L-tyrosyl-[protein] + diphosphate. The catalysed reaction is L-histidyl-[protein] + UTP = N(tele)-(5'-uridylyl)-L-histidyl-[protein] + diphosphate. It catalyses the reaction L-seryl-[protein] + UTP = O-(5'-uridylyl)-L-seryl-[protein] + diphosphate. The enzyme catalyses L-tyrosyl-[protein] + UTP = O-(5'-uridylyl)-L-tyrosyl-[protein] + diphosphate. Nucleotidyltransferase involved in the post-translational modification of proteins. It can catalyze the addition of adenosine monophosphate (AMP) or uridine monophosphate (UMP) to a protein, resulting in modifications known as AMPylation and UMPylation. The protein is Protein nucleotidyltransferase YdiU of Nitrobacter winogradskyi (strain ATCC 25391 / DSM 10237 / CIP 104748 / NCIMB 11846 / Nb-255).